The following is a 1004-amino-acid chain: Glycine dehydrogenase (decarboxylating), mitochondrial (1004 aa).

The residue at position 738 (Lys-738) is an N6-(pyridoxal phosphate)lysine.

Belongs to the GcvP family. As to quaternary structure, homodimer. Interacts with GCSH. The glycine cleavage system is composed of four proteins: P (GLDC), T (GCST), L (DLD) and H (GCSH). Requires pyridoxal 5'-phosphate as cofactor. In terms of tissue distribution, liver (at protein level).

Its subcellular location is the mitochondrion. It catalyses the reaction N(6)-[(R)-lipoyl]-L-lysyl-[glycine-cleavage complex H protein] + glycine + H(+) = N(6)-[(R)-S(8)-aminomethyldihydrolipoyl]-L-lysyl-[glycine-cleavage complex H protein] + CO2. With respect to regulation, stimulated by lipoic acid. Inhibited in presence of methylamine. Its function is as follows. The glycine cleavage system catalyzes the degradation of glycine. The P protein (GLDC) binds the alpha-amino group of glycine through its pyridoxal phosphate cofactor; CO(2) is released and the remaining methylamine moiety is then transferred to the lipoamide cofactor of the H protein (GCSH). The polypeptide is Glycine dehydrogenase (decarboxylating), mitochondrial (Gallus gallus (Chicken)).